The chain runs to 183 residues: Gamma-crystallin N (183 aa).

Beta/gamma crystallin 'Greek key' domains follow at residues 6–46, 47–89, 95–136, and 138–180; these read GKIT…RVES, GAWV…RPVG, FRID…KVYG, and GAWV…RRVL.

Belongs to the beta/gamma-crystallin family. In terms of assembly, monomer. Primordially eye-specific. Present in lens nucleus. In the retina, expression in observed in the outer plexiform layer (containing photoreceptors axons and synapses) and photoreceptor outer segments (at protein level). Also detected in the auditory hindbrain where it is highly expressed in the medial nucleus of the trapezoid body, but also present in other nuclei of the superior olivary complex.

Functionally, crystallins are the dominant structural components of the vertebrate eye lens. Also plays an important role for integrity and function of auditory nuclei. The chain is Gamma-crystallin N from Mus musculus (Mouse).